Here is a 273-residue protein sequence, read N- to C-terminus: BTB and MATH domain-containing protein 15 (273 aa).

Residues E7–V123 enclose the MATH domain. Positions S147–Y206 constitute a BTB domain.

In terms of assembly, interacts with cul-3.

The protein operates within protein modification; protein ubiquitination. In terms of biological role, probable substrate-specific adapter of an E3 ubiquitin-protein ligase complex which mediates the ubiquitination and subsequent proteasomal degradation of target proteins. This is BTB and MATH domain-containing protein 15 (bath-15) from Caenorhabditis elegans.